The sequence spans 892 residues: Integrator complex subunit 6 (892 aa).

The region spanning 3-227 is the VWFA domain; sequence ILLFLIDTSA…QCLESLVQKV (225 aa). Positions 630–637 match the Inhibitory loop motif; it reads MMIDEADE. Disordered regions lie at residues 665 to 692, 711 to 754, and 771 to 793; these read MSPL…GTQG, VGGT…AAPD, and PDHT…EVNE.

This sequence belongs to the Integrator subunit 6 family. As to quaternary structure, component of the Integrator complex, composed of core subunits INTS1, INTS2, INTS3, INTS4, INTS5, INTS6, INTS7, INTS8, INTS9/RC74, INTS10, INTS11/CPSF3L, INTS12, INTS13, INTS14 and INTS15. The core complex associates with protein phosphatase 2A subunits PPP2CA and PPP2R1A, to form the Integrator-PP2A (INTAC) complex.

It localises to the nucleus. The protein localises to the chromosome. Functionally, component of the integrator complex, a multiprotein complex that terminates RNA polymerase II (Pol II) transcription in the promoter-proximal region of genes. The integrator complex provides a quality checkpoint during transcription elongation by driving premature transcription termination of transcripts that are unfavorably configured for transcriptional elongation: the complex terminates transcription by (1) catalyzing dephosphorylation of the C-terminal domain (CTD) of Pol II subunit POLR2A/RPB1 and SUPT5H/SPT5, (2) degrading the exiting nascent RNA transcript via endonuclease activity and (3) promoting the release of Pol II from bound DNA. The integrator complex is also involved in terminating the synthesis of non-coding Pol II transcripts, such as enhancer RNAs (eRNAs), small nuclear RNAs (snRNAs), telomerase RNAs and long non-coding RNAs (lncRNAs). Within the integrator complex, INTS6 acts as a molecular adapter that promotes assembly of protein phosphatase 2A (PP2A) subunits to the integrator core complex, promoting recruitment of PP2A to transcription pause-release checkpoint. The sequence is that of Integrator complex subunit 6 (ints6l) from Danio rerio (Zebrafish).